We begin with the raw amino-acid sequence, 359 residues long: Phosphoribosylformylglycinamidine cyclo-ligase (359 aa).

This sequence belongs to the AIR synthase family.

It localises to the cytoplasm. It carries out the reaction 2-formamido-N(1)-(5-O-phospho-beta-D-ribosyl)acetamidine + ATP = 5-amino-1-(5-phospho-beta-D-ribosyl)imidazole + ADP + phosphate + H(+). It participates in purine metabolism; IMP biosynthesis via de novo pathway; 5-amino-1-(5-phospho-D-ribosyl)imidazole from N(2)-formyl-N(1)-(5-phospho-D-ribosyl)glycinamide: step 2/2. This chain is Phosphoribosylformylglycinamidine cyclo-ligase, found in Brucella melitensis biotype 2 (strain ATCC 23457).